The chain runs to 225 residues: 7-cyano-7-deazaguanine synthase (225 aa).

An ATP-binding site is contributed by 8-18 (VSGGADSATVL). Cys-188, Cys-198, Cys-201, and Cys-204 together coordinate Zn(2+).

It belongs to the QueC family. Zn(2+) is required as a cofactor.

The enzyme catalyses 7-carboxy-7-deazaguanine + NH4(+) + ATP = 7-cyano-7-deazaguanine + ADP + phosphate + H2O + H(+). Its pathway is purine metabolism; 7-cyano-7-deazaguanine biosynthesis. Catalyzes the ATP-dependent conversion of 7-carboxy-7-deazaguanine (CDG) to 7-cyano-7-deazaguanine (preQ(0)). This is 7-cyano-7-deazaguanine synthase from Rickettsia bellii (strain OSU 85-389).